Here is a 33-residue protein sequence, read N- to C-terminus: Mu/delta-theraphotoxin-Pm2a (33 aa).

Disulfide bonds link Cys-2–Cys-16, Cys-9–Cys-21, and Cys-15–Cys-27. Residue Phe-33 is modified to Phenylalanine amide.

In terms of tissue distribution, expressed by the venom gland.

Its subcellular location is the secreted. Its function is as follows. Gating-modifier toxin with very weak activity on Nav1.7/SCN9A and Nav1.8/SCN10A. Shows 22% peak current inhibition (at 10 uM) on Nav1.8/SCN10A sodium channels. Show peak current inhibition and delays fast inactivation on Nav1.7/SCN9A (EC(50)&gt;10 uM). The polypeptide is Mu/delta-theraphotoxin-Pm2a (Poecilotheria metallica (Metallic blue ornamental tree spider)).